A 409-amino-acid polypeptide reads, in one-letter code: Serine/threonine transporter SstT (409 aa).

Helical transmembrane passes span 24–44 (LALG…AGLF), 48–68 (FVGA…AATI), 82–102 (IIVL…IAGM), 142–162 (AIAN…GAAL), 194–214 (LGIF…ALAG), 218–238 (LLAV…PAIV), 292–312 (IPLG…VLAM), 319–339 (GIQV…VSAC), and 365–385 (VAMQ…SAET).

The protein belongs to the dicarboxylate/amino acid:cation symporter (DAACS) (TC 2.A.23) family.

The protein resides in the cell inner membrane. It catalyses the reaction L-serine(in) + Na(+)(in) = L-serine(out) + Na(+)(out). The enzyme catalyses L-threonine(in) + Na(+)(in) = L-threonine(out) + Na(+)(out). Its function is as follows. Involved in the import of serine and threonine into the cell, with the concomitant import of sodium (symport system). The polypeptide is Serine/threonine transporter SstT (Neisseria gonorrhoeae (strain NCCP11945)).